A 69-amino-acid chain; its full sequence is Sperm protamine P1 (69 aa).

The interval 1–69 (MASYRNSRSR…RKRNNNTENK (69 aa)) is disordered. Composition is skewed to basic residues over residues 7-25 (SRSR…RSRV) and 34-63 (RSSR…RKRN).

This sequence belongs to the protamine P1 family. In terms of tissue distribution, testis.

It localises to the nucleus. The protein resides in the chromosome. Protamines substitute for histones in the chromatin of sperm during the haploid phase of spermatogenesis. They compact sperm DNA into a highly condensed, stable and inactive complex. This Perameles gunnii (Eastern barred bandicoot) protein is Sperm protamine P1 (PRM1).